Here is a 560-residue protein sequence, read N- to C-terminus: Protein AATF (560 aa).

At alanine 2 the chain carries N-acetylalanine. A phosphoserine mark is found at serine 61 and serine 63. The interval 76-208 is disordered; that stretch reads TSRKAWNEDH…GDRNSEDDGV (133 aa). Over residues 94 to 129 the composition is skewed to acidic residues; the sequence is SDEEISDEEGSGDEDSEGLGLEEYDEDDLGAAEEQE. A phosphoserine mark is found at serine 150 and serine 155. Residues 156–165 are compositionally biased toward basic and acidic residues; that stretch reads DFEKFTKGMD. The span at 168 to 195 shows a compositional bias: acidic residues; the sequence is GSSEEEEDEESGMEEGDDAEDSQGESEE. Serine 203, serine 273, serine 316, serine 320, and serine 321 each carry phosphoserine. The POLR2J binding stretch occupies residues 273-315; that stretch reads SALKNSHKALKALLRSLVGLQEELLFQYPDTRYLVDGTKPNAG. The tract at residues 309–333 is disordered; it reads GTKPNAGSEEISSEDDELVEEKKQQ. Residues 316 to 372 are RB1 binding; sequence SEEISSEDDELVEEKKQQRRRVPAKRKLEMEDYPSFMAKRFADFTVYRNRTLQKWHD. The tract at residues 373-472 is RB1 and SP1 binding; it reads KTKLASGKLG…FYHQLLRELI (100 aa).

The protein belongs to the AATF family. As to quaternary structure, part of the small subunit (SSU) processome, composed of more than 70 proteins and the RNA chaperone small nucleolar RNA (snoRNA) U3. Interacts with POLR2J, RB1/RB, RBL1/P107 and RBL2/P130. Interacts with PAWR and SP1. May also bind MAPT. Hyperphosphorylated during the G1/S phase transition. In terms of tissue distribution, ubiquitously expressed. Expressed at high levels in brain, heart, kidney, placenta and thymus.

It localises to the nucleus. The protein localises to the nucleolus. Functionally, part of the small subunit (SSU) processome, first precursor of the small eukaryotic ribosomal subunit. During the assembly of the SSU processome in the nucleolus, many ribosome biogenesis factors, an RNA chaperone and ribosomal proteins associate with the nascent pre-rRNA and work in concert to generate RNA folding, modifications, rearrangements and cleavage as well as targeted degradation of pre-ribosomal RNA by the RNA exosome. May function as a general inhibitor of the histone deacetylase HDAC1. Binding to the pocket region of RB1 may displace HDAC1 from RB1/E2F complexes, leading to activation of E2F target genes and cell cycle progression. Conversely, displacement of HDAC1 from SP1 bound to the CDKN1A promoter leads to increased expression of this CDK inhibitor and blocks cell cycle progression. Also antagonizes PAWR mediated induction of aberrant amyloid peptide production in Alzheimer disease (presenile and senile dementia), although the molecular basis for this phenomenon has not been described to date. This is Protein AATF from Homo sapiens (Human).